Consider the following 404-residue polypeptide: Probable sugar efflux transporter (404 aa).

The next 12 membrane-spanning stretches (helical) occupy residues 15–35, 51–71, 85–105, 109–129, 137–157, 168–188, 209–229, 245–265, 276–296, 299–319, 333–353, and 363–383; these read VITFALAGFVFNTTEFIPVAL, GLIITVYAWVVSLMSLPFMLL, LVLFILSHLLSVIAWDFWVLV, IGVALTHSIFWAITASLVIRV, QAIGLLAIGCSLAMILGLPLG, ATFAIIALIAIGILCLFYQLL, PLLLGLYALTMIIISAHFTAY, SMATFVLFVFGLSGITASLLF, FILFSMGLLTATLLLLFIASQ, WTMFLLTFFWGIGIAGIGLGL, VAMAIYSGIYNIGIGAGALLG, and AYIGVAGALFAVFGLVLFILV.

Belongs to the major facilitator superfamily. SotB (TC 2.A.1.2) family.

The protein resides in the cell inner membrane. Involved in the efflux of sugars. The physiological role may be the reduction of the intracellular concentration of toxic sugars or sugar metabolites. The chain is Probable sugar efflux transporter from Pasteurella multocida (strain Pm70).